Reading from the N-terminus, the 126-residue chain is Holo-[acyl-carrier-protein] synthase (126 aa).

Mg(2+) contacts are provided by aspartate 9 and glutamate 58.

This sequence belongs to the P-Pant transferase superfamily. AcpS family. It depends on Mg(2+) as a cofactor.

The protein localises to the cytoplasm. It carries out the reaction apo-[ACP] + CoA = holo-[ACP] + adenosine 3',5'-bisphosphate + H(+). In terms of biological role, transfers the 4'-phosphopantetheine moiety from coenzyme A to a Ser of acyl-carrier-protein. This chain is Holo-[acyl-carrier-protein] synthase, found in Buchnera aphidicola subsp. Cinara cedri (strain Cc).